The sequence spans 388 residues: Putative 8-amino-7-oxononanoate synthase (388 aa).

A substrate-binding site is contributed by Arg-22. 109 to 110 is a binding site for pyridoxal 5'-phosphate; sequence GY. Residue His-134 coordinates substrate. Residues Ser-182, 207 to 210, and 237 to 240 contribute to the pyridoxal 5'-phosphate site; these read DEAH and TLSK. Lys-240 is modified (N6-(pyridoxal phosphate)lysine). Thr-354 contributes to the substrate binding site.

The protein belongs to the class-II pyridoxal-phosphate-dependent aminotransferase family. BioF subfamily. Homodimer. The cofactor is pyridoxal 5'-phosphate.

It carries out the reaction 6-carboxyhexanoyl-[ACP] + L-alanine + H(+) = (8S)-8-amino-7-oxononanoate + holo-[ACP] + CO2. The protein operates within cofactor biosynthesis; biotin biosynthesis. Its function is as follows. Catalyzes the decarboxylative condensation of pimeloyl-[acyl-carrier protein] and L-alanine to produce 8-amino-7-oxononanoate (AON), [acyl-carrier protein], and carbon dioxide. The sequence is that of Putative 8-amino-7-oxononanoate synthase (bioF) from Gloeobacter violaceus (strain ATCC 29082 / PCC 7421).